Reading from the N-terminus, the 235-residue chain is Ribosomal RNA small subunit methyltransferase G (235 aa).

Residues Gly-74, Leu-79, 124 to 125 (AE), and Arg-142 each bind S-adenosyl-L-methionine. The tract at residues 211 to 235 (RRRAAKPGRNKSGRTARSRGRTGRR) is disordered. Residues 213–235 (RAAKPGRNKSGRTARSRGRTGRR) show a composition bias toward basic residues.

The protein belongs to the methyltransferase superfamily. RNA methyltransferase RsmG family.

The protein resides in the cytoplasm. Its function is as follows. Specifically methylates the N7 position of guanine in position 518 of 16S rRNA. The polypeptide is Ribosomal RNA small subunit methyltransferase G (Mycolicibacterium smegmatis (strain ATCC 700084 / mc(2)155) (Mycobacterium smegmatis)).